Consider the following 135-residue polypeptide: Small ribosomal subunit protein uS12 (135 aa).

Asp-89 bears the 3-methylthioaspartic acid mark. Positions 114–135 are disordered; sequence RSRYGAKKGAAKQAAAAKSKKK. Residues 124–135 show a composition bias toward low complexity; sequence AKQAAAAKSKKK.

The protein belongs to the universal ribosomal protein uS12 family. Part of the 30S ribosomal subunit. Contacts proteins S8 and S17. May interact with IF1 in the 30S initiation complex.

With S4 and S5 plays an important role in translational accuracy. Functionally, interacts with and stabilizes bases of the 16S rRNA that are involved in tRNA selection in the A site and with the mRNA backbone. Located at the interface of the 30S and 50S subunits, it traverses the body of the 30S subunit contacting proteins on the other side and probably holding the rRNA structure together. The combined cluster of proteins S8, S12 and S17 appears to hold together the shoulder and platform of the 30S subunit. In Amoebophilus asiaticus (strain 5a2), this protein is Small ribosomal subunit protein uS12.